The sequence spans 349 residues: Protein MULTIPLE CHLOROPLAST DIVISION SITE 1 (349 aa).

A chloroplast-targeting transit peptide spans 1–52 (MASIDSLQFHSLCNLQSSIGRAKLQNPSSLVIFRRRPVNLNWVQFETKGSFV). The Chloroplast intermembrane segment spans residues 53–116 (CKAIGDSSTP…VVFLMKKCSV (64 aa)). Residues 117–139 (NSIWIGVCITATVLVAAIRAYVV) form a helical membrane-spanning segment. At 140 to 349 (RKSRDNQRAG…NSSSEETHKS (210 aa)) the chain is on the stromal side. Positions 315–349 (QRPYKFSAKLEGENIQKNSQENHTGNSSSEETHKS) are disordered. The segment covering 329–343 (IQKNSQENHTGNSSS) has biased composition (polar residues).

As to quaternary structure, interacts with MIND1. Interacts with ARC6 in the chloroplast stroma and binds to FtsZ2-1 in an ARC6-dependent manner.

Its subcellular location is the plastid. The protein localises to the chloroplast inner membrane. Functionally, required for chloroplast division. Together with MIND1 and ARC3, regulates FtsZ ring positioning in chloroplasts in an ARC6-dependent manner. Determines the site of chloroplast division in concert with MIND1. Not directly involved in ring formation, but required for MIND1 and MINE1 localization to regulate FtsZ ring formation during plastidial constriction. This chain is Protein MULTIPLE CHLOROPLAST DIVISION SITE 1, found in Arabidopsis thaliana (Mouse-ear cress).